We begin with the raw amino-acid sequence, 301 residues long: Phosphatidylserine decarboxylase proenzyme (301 aa).

Residues Asp115, His171, and Ser258 each act as charge relay system; for autoendoproteolytic cleavage activity in the active site. The Schiff-base intermediate with substrate; via pyruvic acid; for decarboxylase activity role is filled by Ser258. Residue Ser258 is modified to Pyruvic acid (Ser); by autocatalysis.

Belongs to the phosphatidylserine decarboxylase family. PSD-B subfamily. Prokaryotic type II sub-subfamily. As to quaternary structure, heterodimer of a large membrane-associated beta subunit and a small pyruvoyl-containing alpha subunit. It depends on pyruvate as a cofactor. Post-translationally, is synthesized initially as an inactive proenzyme. Formation of the active enzyme involves a self-maturation process in which the active site pyruvoyl group is generated from an internal serine residue via an autocatalytic post-translational modification. Two non-identical subunits are generated from the proenzyme in this reaction, and the pyruvate is formed at the N-terminus of the alpha chain, which is derived from the carboxyl end of the proenzyme. The autoendoproteolytic cleavage occurs by a canonical serine protease mechanism, in which the side chain hydroxyl group of the serine supplies its oxygen atom to form the C-terminus of the beta chain, while the remainder of the serine residue undergoes an oxidative deamination to produce ammonia and the pyruvoyl prosthetic group on the alpha chain. During this reaction, the Ser that is part of the protease active site of the proenzyme becomes the pyruvoyl prosthetic group, which constitutes an essential element of the active site of the mature decarboxylase.

Its subcellular location is the cell membrane. It catalyses the reaction a 1,2-diacyl-sn-glycero-3-phospho-L-serine + H(+) = a 1,2-diacyl-sn-glycero-3-phosphoethanolamine + CO2. Its pathway is phospholipid metabolism; phosphatidylethanolamine biosynthesis; phosphatidylethanolamine from CDP-diacylglycerol: step 2/2. Its function is as follows. Catalyzes the formation of phosphatidylethanolamine (PtdEtn) from phosphatidylserine (PtdSer). In Chlamydia pneumoniae (Chlamydophila pneumoniae), this protein is Phosphatidylserine decarboxylase proenzyme.